A 197-amino-acid polypeptide reads, in one-letter code: Holliday junction branch migration complex subunit RuvA (197 aa).

The segment at 1 to 64 (MIGHLEGRLR…EDAIQLYGFR (64 aa)) is domain I. Residues 65-143 (TVAEKDMFLR…VKKGREAEQP (79 aa)) form a domain II region. Residues 144 to 145 (AP) are flexible linker. Residues 146 to 197 (AAESSYGDAYSALVNLGYRPAEAEKALGKAIKSLGADPPVEKLLKETLRLLA) form a domain III region.

Belongs to the RuvA family. As to quaternary structure, homotetramer. Forms an RuvA(8)-RuvB(12)-Holliday junction (HJ) complex. HJ DNA is sandwiched between 2 RuvA tetramers; dsDNA enters through RuvA and exits via RuvB. An RuvB hexamer assembles on each DNA strand where it exits the tetramer. Each RuvB hexamer is contacted by two RuvA subunits (via domain III) on 2 adjacent RuvB subunits; this complex drives branch migration. In the full resolvosome a probable DNA-RuvA(4)-RuvB(12)-RuvC(2) complex forms which resolves the HJ.

It localises to the cytoplasm. Functionally, the RuvA-RuvB-RuvC complex processes Holliday junction (HJ) DNA during genetic recombination and DNA repair, while the RuvA-RuvB complex plays an important role in the rescue of blocked DNA replication forks via replication fork reversal (RFR). RuvA specifically binds to HJ cruciform DNA, conferring on it an open structure. The RuvB hexamer acts as an ATP-dependent pump, pulling dsDNA into and through the RuvAB complex. HJ branch migration allows RuvC to scan DNA until it finds its consensus sequence, where it cleaves and resolves the cruciform DNA. The protein is Holliday junction branch migration complex subunit RuvA of Syntrophobacter fumaroxidans (strain DSM 10017 / MPOB).